Here is a 293-residue protein sequence, read N- to C-terminus: uncharacterized protein (293 aa).

Belongs to the TolB family.

This is an uncharacterized protein from Agrobacterium fabrum (strain C58 / ATCC 33970) (Agrobacterium tumefaciens (strain C58)).